The sequence spans 174 residues: Endoribonuclease YbeY (174 aa).

Positions 129, 133, and 139 each coordinate Zn(2+).

It belongs to the endoribonuclease YbeY family. The cofactor is Zn(2+).

The protein resides in the cytoplasm. Functionally, single strand-specific metallo-endoribonuclease involved in late-stage 70S ribosome quality control and in maturation of the 3' terminus of the 16S rRNA. The protein is Endoribonuclease YbeY of Lactobacillus delbrueckii subsp. bulgaricus (strain ATCC BAA-365 / Lb-18).